The sequence spans 134 residues: Large ribosomal subunit protein uL22 (134 aa).

It belongs to the universal ribosomal protein uL22 family. In terms of assembly, part of the 50S ribosomal subunit.

Functionally, this protein binds specifically to 23S rRNA; its binding is stimulated by other ribosomal proteins, e.g. L4, L17, and L20. It is important during the early stages of 50S assembly. It makes multiple contacts with different domains of the 23S rRNA in the assembled 50S subunit and ribosome. In terms of biological role, the globular domain of the protein is located near the polypeptide exit tunnel on the outside of the subunit, while an extended beta-hairpin is found that lines the wall of the exit tunnel in the center of the 70S ribosome. The protein is Large ribosomal subunit protein uL22 of Gluconacetobacter diazotrophicus (strain ATCC 49037 / DSM 5601 / CCUG 37298 / CIP 103539 / LMG 7603 / PAl5).